The chain runs to 476 residues: Glutamyl-tRNA(Gln) amidotransferase subunit A (476 aa).

Residues Lys70 and Ser145 each act as charge relay system in the active site. The active-site Acyl-ester intermediate is Ser169.

Belongs to the amidase family. GatA subfamily. Heterotrimer of A, B and C subunits.

It catalyses the reaction L-glutamyl-tRNA(Gln) + L-glutamine + ATP + H2O = L-glutaminyl-tRNA(Gln) + L-glutamate + ADP + phosphate + H(+). In terms of biological role, allows the formation of correctly charged Gln-tRNA(Gln) through the transamidation of misacylated Glu-tRNA(Gln) in organisms which lack glutaminyl-tRNA synthetase. The reaction takes place in the presence of glutamine and ATP through an activated gamma-phospho-Glu-tRNA(Gln). The sequence is that of Glutamyl-tRNA(Gln) amidotransferase subunit A from Methanosarcina acetivorans (strain ATCC 35395 / DSM 2834 / JCM 12185 / C2A).